Reading from the N-terminus, the 613-residue chain is MSESERSEGFPEGFAGAGSGSLSSEDAAELEALRREAAMLREQLENAVGPQSGLRSARDVHQLEARIDSLAARNAKLMDTLKEARQQLLALREEVDRLGQPPSGYGVLLATHDDDTVDVFTSGRKMRLTCSPNIEVKELKQGQTVRLNEALTVVEAGNFEAVGEISTLREILADGHRALVVGHADEERIVWLAEPLVAAKDLPDEPTDYFDDSRPRKLRPGDSLLVDTKAGYAFERIPKAEVEDLVLEEVPDVSYNDIGGLGRQIEQIRDAVELPFLHKDLYKEYSLRPPKGVLLYGPPGCGKTLIAKAVANSLAKKMAEVRGDDAREAKSYFLNIKGPELLNKFVGETERHIRLIFQRAREKASEGTPVIVFFDEMDSIFRTRGTGVSSDVETTVVPQLLSEIDGVEGLENVIVIGASNREDMIDPAILRPGRLDVKIKIERPDAEAAQDIFSKYLTEDLPVHADDLTEFNGDRALCIKAMIEKVVDRMYAEIDDNRFLEVTYANGDKEVMYFKDFNSGAMIQNVVDRAKKYAIKSVLETGQKGLRIQHLLDSIVDEFAENEDLPNTTNPDDWARISGKKGERIVYIRTLVTGKSSSASRAIDTESNLGQYL.

Positions 1-29 (MSESERSEGFPEGFAGAGSGSLSSEDAAE) are disordered. The stretch at 23 to 100 (SSEDAAELEA…LREEVDRLGQ (78 aa)) forms a coiled coil. 300 to 305 (GCGKTL) provides a ligand contact to ATP. Residue Lys595 forms an Isoglutamyl lysine isopeptide (Lys-Gln) (interchain with Q-Cter in protein Pup) linkage. The docks into pockets in the proteasome alpha-ring stretch occupies residues 612–613 (YL).

This sequence belongs to the AAA ATPase family. As to quaternary structure, homohexamer. Assembles into a hexameric ring structure that caps the 20S proteasome core. Strongly interacts with the prokaryotic ubiquitin-like protein Pup through a hydrophobic interface; the interacting region of ARC lies in its N-terminal coiled-coil domain. There is one Pup binding site per ARC hexamer ring. Upon ATP-binding, the C-terminus of ARC interacts with the alpha-rings of the proteasome core, possibly by binding to the intersubunit pockets.

Its pathway is protein degradation; proteasomal Pup-dependent pathway. ATPase which is responsible for recognizing, binding, unfolding and translocation of pupylated proteins into the bacterial 20S proteasome core particle. May be essential for opening the gate of the 20S proteasome via an interaction with its C-terminus, thereby allowing substrate entry and access to the site of proteolysis. Thus, the C-termini of the proteasomal ATPase may function like a 'key in a lock' to induce gate opening and therefore regulate proteolysis. This Mycolicibacterium smegmatis (strain ATCC 700084 / mc(2)155) (Mycobacterium smegmatis) protein is Proteasome-associated ATPase.